Reading from the N-terminus, the 96-residue chain is Small ribosomal subunit protein bS6 (96 aa).

Belongs to the bacterial ribosomal protein bS6 family.

Functionally, binds together with bS18 to 16S ribosomal RNA. The protein is Small ribosomal subunit protein bS6 of Streptococcus gordonii (strain Challis / ATCC 35105 / BCRC 15272 / CH1 / DL1 / V288).